Consider the following 210-residue polypeptide: Claudin-4 (210 aa).

At 1–7 (MASMGLQ) the chain is on the cytoplasmic side. The tract at residues 1–103 (MASMGLQVMG…GVLLSVVGGK (103 aa)) is interaction with EPHA2. The helical transmembrane segment at 8–28 (VMGIALAVLGWLGAILSCALP) threads the bilayer. At 29-81 (MWRVTAFIGSNIVTSQTIWEGLWMNCVVQSTGQMQCKVYDSLLALPQDLQAAR) the chain is on the extracellular side. A disulfide bridge links Cys-54 with Cys-64. Residues 82–102 (ALMVVSIILAALGVLLSVVGG) form a helical membrane-spanning segment. Residues 103–117 (KCTNCVEDESAKAKT) lie on the Cytoplasmic side of the membrane. The helical transmembrane segment at 118 to 138 (MIVAGVVFLLAGLLVMVPASW) threads the bilayer. At 139–160 (TANNIIRDFYNPLVVSGQKREM) the chain is on the extracellular side. A helical transmembrane segment spans residues 161 to 181 (GASLYVGWAASGLLLLGGALL). At 182-210 (CCNCPPRADKPYSAKYSAAARSAPASNYV) the chain is on the cytoplasmic side. Position 209 is a phosphotyrosine (Tyr-209). The interactions with TJP1, TJP2 and TJP3 stretch occupies residues 209–210 (YV).

The protein belongs to the claudin family. Can form heteropolymeric strands with other claudins. Interacts with CLDN8. Interacts with CLDN1. Directly interacts with TJP1/ZO-1. Interacts with TJP2/ZO-2 and TJP3/ZO-3. Interacts with EPHA2; phosphorylates CLDN4 and may regulate tight junctions. Phosphorylated. Phosphorylation by EPHA2 is stimulated by EFNA1 and alters interaction with TJP1.

It is found in the cell junction. The protein localises to the tight junction. The protein resides in the cell membrane. It catalyses the reaction chloride(in) = chloride(out). The catalysed reaction is bromide(in) = bromide(out). It carries out the reaction iodide(out) = iodide(in). The enzyme catalyses fluoride(in) = fluoride(out). Functionally, can associate with other claudins to regulate tight junction structural and functional strand dynamics. May coassemble with CLDN8 into tight junction strands containing anion-selective channels that convey paracellular chloride permeability in renal collecting ducts. May integrate into CLDN3 strands to modulate localized tight junction barrier properties. May disrupt strand assembly of channel-forming CLDN2 and CLDN15 and inhibit cation conductance. Cannot form tight junction strands on its own. The polypeptide is Claudin-4 (CLDN4) (Canis lupus familiaris (Dog)).